Here is a 509-residue protein sequence, read N- to C-terminus: tRNA (guanine(37)-N(1))-methyltransferase (509 aa).

The N-terminal 57 residues, 1–57 (MVLWILWRPFGFSRRLLKLERHSITESKSLIPLAWTSLTQTLSESPGIFLLGQRKRF), are a transit peptide targeting the mitochondrion. S-adenosyl-L-methionine-binding positions include histidine 289, 327 to 328 (DL), 355 to 356 (DG), and asparagine 387. The tract at residues 478–509 (TKNPENHEDPPLKRQRTAEAFSDEKTQIASNT) is disordered.

The protein belongs to the class I-like SAM-binding methyltransferase superfamily. TRM5/TYW2 family. Monomer.

It is found in the mitochondrion matrix. It localises to the nucleus. Its subcellular location is the cytoplasm. The catalysed reaction is guanosine(37) in tRNA + S-adenosyl-L-methionine = N(1)-methylguanosine(37) in tRNA + S-adenosyl-L-homocysteine + H(+). Its function is as follows. Involved in mitochondrial tRNA methylation. Specifically methylates the N1 position of guanosine-37 in various tRNAs. Methylation is not dependent on the nature of the nucleoside 5' of the target nucleoside. This is the first step in the biosynthesis of wybutosine (yW), a modified base adjacent to the anticodon of tRNAs and required for accurate decoding. In Macaca mulatta (Rhesus macaque), this protein is tRNA (guanine(37)-N(1))-methyltransferase.